The primary structure comprises 413 residues: Probable protein phosphatase 2C 78 (413 aa).

The disordered stretch occupies residues 21-40; sequence KKATTTTRRRERSSSQAARR. The PPM-type phosphatase domain occupies 111 to 409; it reads KYGVASVCGR…DNVSVVVVDL (299 aa). Mn(2+) contacts are provided by Asp-153, Gly-154, Asp-327, and Asp-400.

It belongs to the PP2C family. It depends on Mg(2+) as a cofactor. Mn(2+) is required as a cofactor.

It is found in the golgi apparatus. It localises to the nucleus. The enzyme catalyses O-phospho-L-seryl-[protein] + H2O = L-seryl-[protein] + phosphate. It carries out the reaction O-phospho-L-threonyl-[protein] + H2O = L-threonyl-[protein] + phosphate. In terms of biological role, acts as a negative regulator of abscisic acid (ABA) signaling for stomatal closure in leaves, and controls water loss during leaf senescence. Activated by the NAC029/NAP transcription factor during ABA signaling in senescing leaves. Functions as a negative regulator of osmotic stress and ABA signaling. Acts as a negative regulator of response to drought. This chain is Probable protein phosphatase 2C 78, found in Arabidopsis thaliana (Mouse-ear cress).